The following is a 469-amino-acid chain: Probable Xaa-Pro aminopeptidase AN0832 (469 aa).

Mn(2+)-binding residues include Asp-260, Asp-271, Glu-398, and Glu-437.

This sequence belongs to the peptidase M24B family. It depends on Mn(2+) as a cofactor.

It catalyses the reaction Release of any N-terminal amino acid, including proline, that is linked to proline, even from a dipeptide or tripeptide.. Functionally, catalyzes the removal of a penultimate prolyl residue from the N-termini of peptides. This chain is Probable Xaa-Pro aminopeptidase AN0832, found in Emericella nidulans (strain FGSC A4 / ATCC 38163 / CBS 112.46 / NRRL 194 / M139) (Aspergillus nidulans).